A 305-amino-acid chain; its full sequence is Methionyl-tRNA formyltransferase (305 aa).

Ser110–Pro113 serves as a coordination point for (6S)-5,6,7,8-tetrahydrofolate.

Belongs to the Fmt family.

It carries out the reaction L-methionyl-tRNA(fMet) + (6R)-10-formyltetrahydrofolate = N-formyl-L-methionyl-tRNA(fMet) + (6S)-5,6,7,8-tetrahydrofolate + H(+). Functionally, attaches a formyl group to the free amino group of methionyl-tRNA(fMet). The formyl group appears to play a dual role in the initiator identity of N-formylmethionyl-tRNA by promoting its recognition by IF2 and preventing the misappropriation of this tRNA by the elongation apparatus. This is Methionyl-tRNA formyltransferase from Ureaplasma parvum serovar 3 (strain ATCC 700970).